A 1087-amino-acid polypeptide reads, in one-letter code: Error-prone DNA polymerase 2 (1087 aa).

The disordered stretch occupies residues 1033-1064 (DGAFRPPTGRGDEFAHGSPGSADSRGKAPPGV).

It belongs to the DNA polymerase type-C family. DnaE2 subfamily.

Its subcellular location is the cytoplasm. It catalyses the reaction DNA(n) + a 2'-deoxyribonucleoside 5'-triphosphate = DNA(n+1) + diphosphate. Its function is as follows. DNA polymerase involved in damage-induced mutagenesis and translesion synthesis (TLS). It is not the major replicative DNA polymerase. The sequence is that of Error-prone DNA polymerase 2 from Rhizobium meliloti (strain 1021) (Ensifer meliloti).